Reading from the N-terminus, the 681-residue chain is Protein hook (681 aa).

Positions 6 to 123 (NEMYYSLLEW…RLLQLVLGCA (118 aa)) constitute a Calponin-homology (CH) domain. Coiled-coil stretches lie at residues 135 to 439 (EIMS…LKCG) and 482 to 584 (QTAL…KYRK).

This sequence belongs to the hook family. As to quaternary structure, homodimer. Interacts with microtubules via its N-terminus.

It is found in the cytoplasm. It localises to the cytoskeleton. Its subcellular location is the endosome. The protein localises to the synapse. Functionally, involved in endocytic trafficking by stabilizing organelles of the endocytic pathway. Probably acts as a cytoskeletal linker protein required to tether endosome vesicles to the cytoskeleton. Involved in modulation of endocytosis at stages required for down-regulation of membrane proteins that control synapse size. Not involved in synaptic vesicle recycling. Required in R7 cells for boss endocytosis into multivesicular bodies (MVBs). Has a role in regulating adult longevity. This chain is Protein hook, found in Drosophila ananassae (Fruit fly).